The chain runs to 162 residues: Probable chorismate pyruvate-lyase (162 aa).

Substrate-binding residues include R54, L92, and E149.

It belongs to the UbiC family.

Its subcellular location is the cytoplasm. The catalysed reaction is chorismate = 4-hydroxybenzoate + pyruvate. It participates in cofactor biosynthesis; ubiquinone biosynthesis. Functionally, removes the pyruvyl group from chorismate, with concomitant aromatization of the ring, to provide 4-hydroxybenzoate (4HB) for the ubiquinone pathway. This chain is Probable chorismate pyruvate-lyase, found in Methylococcus capsulatus (strain ATCC 33009 / NCIMB 11132 / Bath).